A 227-amino-acid chain; its full sequence is 7-cyano-7-deazaguanine synthase (227 aa).

16-26 (FSGGQDSTTCL) is an ATP binding site. Positions 194, 202, 205, and 208 each coordinate Zn(2+).

This sequence belongs to the QueC family. The cofactor is Zn(2+).

The enzyme catalyses 7-carboxy-7-deazaguanine + NH4(+) + ATP = 7-cyano-7-deazaguanine + ADP + phosphate + H2O + H(+). It participates in purine metabolism; 7-cyano-7-deazaguanine biosynthesis. Its function is as follows. Catalyzes the ATP-dependent conversion of 7-carboxy-7-deazaguanine (CDG) to 7-cyano-7-deazaguanine (preQ(0)). The chain is 7-cyano-7-deazaguanine synthase from Haemophilus influenzae (strain PittEE).